The following is a 318-amino-acid chain: HPr kinase/phosphorylase (318 aa).

Residues His146 and Lys167 contribute to the active site. ATP is bound at residue 161–168 (GESGLGKS). Ser168 contacts Mg(2+). The Proton acceptor; for phosphorylation activity. Proton donor; for dephosphorylation activity role is filled by Asp185. Positions 209-218 (LEVRGIGLLD) are important for the catalytic mechanism of both phosphorylation and dephosphorylation. Glu210 lines the Mg(2+) pocket. Arg252 is an active-site residue. Positions 273-278 (QVVAGR) are important for the catalytic mechanism of dephosphorylation.

The protein belongs to the HPrK/P family. In terms of assembly, homohexamer. Mg(2+) serves as cofactor.

The enzyme catalyses [HPr protein]-L-serine + ATP = [HPr protein]-O-phospho-L-serine + ADP + H(+). The catalysed reaction is [HPr protein]-O-phospho-L-serine + phosphate + H(+) = [HPr protein]-L-serine + diphosphate. Its function is as follows. Catalyzes the ATP- as well as the pyrophosphate-dependent phosphorylation of a specific serine residue in HPr, a phosphocarrier protein of the phosphoenolpyruvate-dependent sugar phosphotransferase system (PTS). HprK/P also catalyzes the pyrophosphate-producing, inorganic phosphate-dependent dephosphorylation (phosphorolysis) of seryl-phosphorylated HPr (P-Ser-HPr). This is HPr kinase/phosphorylase from Acidovorax sp. (strain JS42).